We begin with the raw amino-acid sequence, 418 residues long: Gamma-glutamyl phosphate reductase (418 aa).

The protein belongs to the gamma-glutamyl phosphate reductase family.

Its subcellular location is the cytoplasm. It carries out the reaction L-glutamate 5-semialdehyde + phosphate + NADP(+) = L-glutamyl 5-phosphate + NADPH + H(+). The protein operates within amino-acid biosynthesis; L-proline biosynthesis; L-glutamate 5-semialdehyde from L-glutamate: step 2/2. Functionally, catalyzes the NADPH-dependent reduction of L-glutamate 5-phosphate into L-glutamate 5-semialdehyde and phosphate. The product spontaneously undergoes cyclization to form 1-pyrroline-5-carboxylate. The protein is Gamma-glutamyl phosphate reductase of Dechloromonas aromatica (strain RCB).